Here is a 289-residue protein sequence, read N- to C-terminus: 2-dehydro-3-deoxyphosphooctonate aldolase (289 aa).

This sequence belongs to the KdsA family.

It localises to the cytoplasm. The catalysed reaction is D-arabinose 5-phosphate + phosphoenolpyruvate + H2O = 3-deoxy-alpha-D-manno-2-octulosonate-8-phosphate + phosphate. Its pathway is carbohydrate biosynthesis; 3-deoxy-D-manno-octulosonate biosynthesis; 3-deoxy-D-manno-octulosonate from D-ribulose 5-phosphate: step 2/3. It participates in bacterial outer membrane biogenesis; lipopolysaccharide biosynthesis. The sequence is that of 2-dehydro-3-deoxyphosphooctonate aldolase from Cupriavidus taiwanensis (strain DSM 17343 / BCRC 17206 / CCUG 44338 / CIP 107171 / LMG 19424 / R1) (Ralstonia taiwanensis (strain LMG 19424)).